A 362-amino-acid polypeptide reads, in one-letter code: Adenosine deaminase (362 aa).

The Zn(2+) site is built by His41 and His43. 43–45 (HLD) serves as a coordination point for a purine D-ribonucleoside. Positions 169 to 183 (IGETGISEESLRKAA) are gating helix loop; regulates binding affinity for substrates and thus substrate selectivity. Gly200 lines the a purine D-ribonucleoside pocket. Position 225 (His225) interacts with Zn(2+). The a purine D-ribonucleoside site is built by Glu228, His252, and Asp309. Residue Asp309 participates in Zn(2+) binding.

Belongs to the metallo-dependent hydrolases superfamily. Adenosine and AMP deaminases family. It depends on Zn(2+) as a cofactor.

The enzyme catalyses adenosine + H2O + H(+) = inosine + NH4(+). Its pathway is purine metabolism; purine nucleoside salvage. Its activity is regulated as follows. Inhibited by coformycin but not by methylthiocoformycin (MT-coformycin). Catalyzes the hydrolytic deamination of adenosine to produce inosine. Unlike other Plasmodium adenosine deaminases, does not catalyze the deamination of 5'-methylthioadenosine (MTA). Plays an essential role in the purine salvage pathway which allows the parasite to use host cell purines for the synthesis of nucleic acids. This chain is Adenosine deaminase, found in Plasmodium gallinaceum.